The primary structure comprises 217 residues: tRNA 5-hydroxyuridine methyltransferase (217 aa).

Residues methionine 38, serine 68, glutamate 85, 113–114 (DA), and aspartate 133 each bind S-adenosyl-L-methionine. Residues aspartate 133, aspartate 159, and asparagine 160 each coordinate Mg(2+).

The protein belongs to the class I-like SAM-binding methyltransferase superfamily. Cation-dependent O-methyltransferase family. As to quaternary structure, homodimer.

It catalyses the reaction 5-hydroxyuridine(34) in tRNA + S-adenosyl-L-methionine = 5-methoxyuridine(34) in tRNA + S-adenosyl-L-homocysteine + H(+). In terms of biological role, catalyzes the methylation of 5-hydroxyuridine (ho5U) to form 5-methoxyuridine (mo5U) at position 34 in tRNAs. The polypeptide is tRNA 5-hydroxyuridine methyltransferase (Bacillus subtilis (strain 168)).